Here is a 205-residue protein sequence, read N- to C-terminus: Large ribosomal subunit protein uL4 (205 aa).

Belongs to the universal ribosomal protein uL4 family. As to quaternary structure, part of the 50S ribosomal subunit.

In terms of biological role, one of the primary rRNA binding proteins, this protein initially binds near the 5'-end of the 23S rRNA. It is important during the early stages of 50S assembly. It makes multiple contacts with different domains of the 23S rRNA in the assembled 50S subunit and ribosome. Its function is as follows. Forms part of the polypeptide exit tunnel. In Ruegeria sp. (strain TM1040) (Silicibacter sp.), this protein is Large ribosomal subunit protein uL4.